A 171-amino-acid chain; its full sequence is Sec-independent protein translocase protein TatB (171 aa).

A helical transmembrane segment spans residues 1–21; sequence MFDIGFSELLLVFIIGLVVLG. Residues 117–171 form a disordered region; that stretch reads KDNETAHEGVTPAAAQTQASSPEQKPETTPEPVVKPAADAEPKTAAPSPSSSDKP. Over residues 130–139 the composition is skewed to polar residues; sequence AAQTQASSPE.

Belongs to the TatB family. The Tat system comprises two distinct complexes: a TatABC complex, containing multiple copies of TatA, TatB and TatC subunits, and a separate TatA complex, containing only TatA subunits. Substrates initially bind to the TatABC complex, which probably triggers association of the separate TatA complex to form the active translocon.

Its subcellular location is the cell inner membrane. Functionally, part of the twin-arginine translocation (Tat) system that transports large folded proteins containing a characteristic twin-arginine motif in their signal peptide across membranes. Together with TatC, TatB is part of a receptor directly interacting with Tat signal peptides. TatB may form an oligomeric binding site that transiently accommodates folded Tat precursor proteins before their translocation. This chain is Sec-independent protein translocase protein TatB, found in Escherichia coli O6:K15:H31 (strain 536 / UPEC).